The chain runs to 270 residues: tRNA pseudouridine synthase A (270 aa).

The active-site Nucleophile is Asp51. Tyr109 lines the substrate pocket.

It belongs to the tRNA pseudouridine synthase TruA family. Homodimer.

The enzyme catalyses uridine(38/39/40) in tRNA = pseudouridine(38/39/40) in tRNA. In terms of biological role, formation of pseudouridine at positions 38, 39 and 40 in the anticodon stem and loop of transfer RNAs. This chain is tRNA pseudouridine synthase A, found in Burkholderia mallei (strain ATCC 23344).